Consider the following 110-residue polypeptide: Nucleoid-associated protein ESA_02800 (110 aa).

The tract at residues 89–110 is disordered; sequence QKEKMASVSSGMQLPPGFKMPF.

Belongs to the YbaB/EbfC family. In terms of assembly, homodimer.

Its subcellular location is the cytoplasm. The protein localises to the nucleoid. Functionally, binds to DNA and alters its conformation. May be involved in regulation of gene expression, nucleoid organization and DNA protection. In Cronobacter sakazakii (strain ATCC BAA-894) (Enterobacter sakazakii), this protein is Nucleoid-associated protein ESA_02800.